The sequence spans 678 residues: ATP-dependent RNA helicase DHX58 (678 aa).

The Helicase ATP-binding domain occupies 11 to 188 (ILPALEGKNI…QGAIDHILQL (178 aa)). Residue 24–31 (LPTGAGKT) participates in ATP binding. The DECH box signature appears at 131–134 (DECH). One can recognise a Helicase C-terminal domain in the interval 353-514 (MLERILLKQF…KAVAAVQKMD (162 aa)). The stretch at 489-546 (EMKRELTNEALEVLMEKAVAAVQKMDPDEFKAKIRDLQQASLVKRAARAAHREIQQGQ) forms a coiled coil. The region spanning 542-669 (IQQGQFLPEH…PVFDILQDCT (128 aa)) is the RLR CTR domain. Zn(2+) is bound by residues Cys-556, Cys-559, Cys-612, and Cys-615. The interval 572 to 655 (VEGTHHVNVN…KIQAKKWSRV (84 aa)) is RNA-binding.

The protein belongs to the helicase family. RLR subfamily. As to quaternary structure, monomer in the absence of dsRNA. Homodimer in the presence of dsRNA. Interacts with RIGI (via CARD domain), MAVS/IPS1 and DDX60. Found in a complex with RIGI and IFIH1/MDA5. Interacts with ANKRD17. Directly interacts with ATG5 and ATG12, either as ATG5 and ATG12 monomers or as ATG12-ATG5 conjugates. In terms of tissue distribution, highly expressed in mammary tissues. Expressed in liver and testis. Expressed at lower level in spleen, embryo, mammary gland and breast tumors.

The protein localises to the cytoplasm. It catalyses the reaction ATP + H2O = ADP + phosphate + H(+). Functionally, acts as a regulator of RIGI and IFIH1/MDA5 mediated antiviral signaling. Cannot initiate antiviral signaling as it lacks the CARD domain required for activating MAVS/IPS1-dependent signaling events. Can have both negative and positive regulatory functions related to RIGI and IFIH1/MDA5 signaling and this role in regulating signaling may be complex and could probably depend on characteristics of the infecting virus or target cells, or both. Its inhibitory action on RIG-I signaling may involve the following mechanisms: competition with RIGI for binding to the viral RNA, binding to RIGI and inhibiting its dimerization and interaction with MAVS/IPS1, competing with IKBKE in its binding to MAVS/IPS1 thereby inhibiting activation of interferon regulatory factor 3 (IRF3). Its positive regulatory role may involve unwinding or stripping nucleoproteins of viral RNA thereby facilitating their recognition by RIGI and IFIH1/MDA5. Involved in the innate immune response to various RNA viruses and some DNA viruses such as poxviruses, and also to the bacterial pathogen Listeria monocytogenes. Can bind both ssRNA and dsRNA, with a higher affinity for dsRNA. Shows a preference to 5'-triphosphorylated RNA, although it can recognize RNA lacking a 5'-triphosphate. The polypeptide is ATP-dependent RNA helicase DHX58 (Mus musculus (Mouse)).